The sequence spans 185 residues: Ribosome-recycling factor (185 aa).

The residue at position 162 (Lys162) is an N6-acetyllysine.

The protein belongs to the RRF family.

It localises to the cytoplasm. Responsible for the release of ribosomes from messenger RNA at the termination of protein biosynthesis. May increase the efficiency of translation by recycling ribosomes from one round of translation to another. The polypeptide is Ribosome-recycling factor (Shigella boydii serotype 18 (strain CDC 3083-94 / BS512)).